Reading from the N-terminus, the 339-residue chain is Lipoyl synthase (339 aa).

The segment at 13 to 35 (RPKLDAPARPRHPEKAHRPDTAI) is disordered. [4Fe-4S] cluster-binding residues include Cys68, Cys73, Cys79, Cys94, Cys98, Cys101, and Ser307. The Radical SAM core domain maps to 80–296 (WEKRHATFMI…ETTAYAKGFL (217 aa)).

It belongs to the radical SAM superfamily. Lipoyl synthase family. Requires [4Fe-4S] cluster as cofactor.

The protein resides in the cytoplasm. The catalysed reaction is [[Fe-S] cluster scaffold protein carrying a second [4Fe-4S](2+) cluster] + N(6)-octanoyl-L-lysyl-[protein] + 2 oxidized [2Fe-2S]-[ferredoxin] + 2 S-adenosyl-L-methionine + 4 H(+) = [[Fe-S] cluster scaffold protein] + N(6)-[(R)-dihydrolipoyl]-L-lysyl-[protein] + 4 Fe(3+) + 2 hydrogen sulfide + 2 5'-deoxyadenosine + 2 L-methionine + 2 reduced [2Fe-2S]-[ferredoxin]. Its pathway is protein modification; protein lipoylation via endogenous pathway; protein N(6)-(lipoyl)lysine from octanoyl-[acyl-carrier-protein]: step 2/2. Functionally, catalyzes the radical-mediated insertion of two sulfur atoms into the C-6 and C-8 positions of the octanoyl moiety bound to the lipoyl domains of lipoate-dependent enzymes, thereby converting the octanoylated domains into lipoylated derivatives. This chain is Lipoyl synthase, found in Methylorubrum extorquens (strain PA1) (Methylobacterium extorquens).